Here is a 294-residue protein sequence, read N- to C-terminus: Cytidine deaminase (294 aa).

2 CMP/dCMP-type deaminase domains span residues 48 to 168 (DEDA…FGPK) and 186 to 294 (LTGD…TLLA). 89–91 (NME) is a substrate binding site. Position 102 (His102) interacts with Zn(2+). The Proton donor role is filled by Glu104. Residues Cys129 and Cys132 each contribute to the Zn(2+) site.

Belongs to the cytidine and deoxycytidylate deaminase family. Homodimer. It depends on Zn(2+) as a cofactor.

It catalyses the reaction cytidine + H2O + H(+) = uridine + NH4(+). The enzyme catalyses 2'-deoxycytidine + H2O + H(+) = 2'-deoxyuridine + NH4(+). Functionally, this enzyme scavenges exogenous and endogenous cytidine and 2'-deoxycytidine for UMP synthesis. The sequence is that of Cytidine deaminase from Enterobacter sp. (strain 638).